Consider the following 466-residue polypeptide: Adenosylhomocysteinase (466 aa).

Residues Thr57, Asp132, and Glu192 each coordinate substrate. NAD(+) is bound at residue 193 to 195 (TTT). Substrate is bound by residues Lys222 and Asp226. Residues Asn227, 256-261 (GYGDVG), Glu279, Asn314, 335-337 (IGH), and Asn380 contribute to the NAD(+) site.

It belongs to the adenosylhomocysteinase family. Requires NAD(+) as cofactor.

Its subcellular location is the cytoplasm. The enzyme catalyses S-adenosyl-L-homocysteine + H2O = L-homocysteine + adenosine. Its pathway is amino-acid biosynthesis; L-homocysteine biosynthesis; L-homocysteine from S-adenosyl-L-homocysteine: step 1/1. May play a key role in the regulation of the intracellular concentration of adenosylhomocysteine. The chain is Adenosylhomocysteinase from Rhizobium meliloti (strain 1021) (Ensifer meliloti).